The sequence spans 134 residues: ATP synthase epsilon chain (134 aa).

It belongs to the ATPase epsilon chain family. As to quaternary structure, F-type ATPases have 2 components, CF(1) - the catalytic core - and CF(0) - the membrane proton channel. CF(1) has five subunits: alpha(3), beta(3), gamma(1), delta(1), epsilon(1). CF(0) has three main subunits: a, b and c.

Its subcellular location is the cell inner membrane. In terms of biological role, produces ATP from ADP in the presence of a proton gradient across the membrane. In Syntrophobacter fumaroxidans (strain DSM 10017 / MPOB), this protein is ATP synthase epsilon chain.